The sequence spans 355 residues: 4-dimethylallyltryptophan N-methyltransferase easF (355 aa).

It belongs to the methyltransferase superfamily. As to quaternary structure, homodimer.

It catalyses the reaction 4-(3-methylbut-2-enyl)-L-tryptophan + S-adenosyl-L-methionine = 4-(3-methylbut-2-enyl)-L-abrine + S-adenosyl-L-homocysteine + H(+). It functions in the pathway alkaloid biosynthesis; ergot alkaloid biosynthesis. 4-dimethylallyltryptophan N-methyltransferase; part of the gene cluster that mediates the biosynthesis of fungal ergot alkaloid. DmaW catalyzes the first step of ergot alkaloid biosynthesis by condensing dimethylallyl diphosphate (DMAP) and tryptophan to form 4-dimethylallyl-L-tryptophan. The second step is catalyzed by the methyltransferase easF that methylates 4-dimethylallyl-L-tryptophan in the presence of S-adenosyl-L-methionine, resulting in the formation of 4-dimethylallyl-L-abrine. The catalase easC and the FAD-dependent oxidoreductase easE then transform 4-dimethylallyl-L-abrine to chanoclavine-I which is further oxidized by easD in the presence of NAD(+), resulting in the formation of chanoclavine-I aldehyde. Agroclavine dehydrogenase easG then mediates the conversion of chanoclavine-I aldehyde to agroclavine via a non-enzymatic adduct reaction: the substrate is an iminium intermediate that is formed spontaneously from chanoclavine-I aldehyde in the presence of glutathione. Further conversion of agroclavine to paspalic acid is a two-step process involving oxidation of agroclavine to elymoclavine and of elymoclavine to paspalic acid, the second step being performed by the elymoclavine oxidase cloA. However, cloA does not encode a functional enzyme indicating that C.fusiformis terminates its ergot alkaloid pathway at elymoclavine. The chain is 4-dimethylallyltryptophan N-methyltransferase easF from Claviceps fusiformis (Ergot fungus).